A 101-amino-acid polypeptide reads, in one-letter code: DNA-binding protein TubR (101 aa).

Homodimer. Dimers bind to DNA, forming a protein-bound filament which may form a helix around the TubZ filament.

A DNA-binding protein that is part of the type III plasmid partition system used to ensure correct segregation of the pBM400 plasmid. Binds the plasmid origin of replication, probably cooperatively, forming a ring or short helix with external DNA. Its effect on RNA expression has not been shown. The polypeptide is DNA-binding protein TubR (Priestia megaterium (strain ATCC 12872 / QMB1551) (Bacillus megaterium)).